A 157-amino-acid chain; its full sequence is SsrA-binding protein (157 aa).

The segment at 128–157 (LARGKKQHDKRAAEKERDWEREKQRVMRRG) is disordered. Positions 137–157 (KRAAEKERDWEREKQRVMRRG) are enriched in basic and acidic residues.

It belongs to the SmpB family.

It localises to the cytoplasm. Required for rescue of stalled ribosomes mediated by trans-translation. Binds to transfer-messenger RNA (tmRNA), required for stable association of tmRNA with ribosomes. tmRNA and SmpB together mimic tRNA shape, replacing the anticodon stem-loop with SmpB. tmRNA is encoded by the ssrA gene; the 2 termini fold to resemble tRNA(Ala) and it encodes a 'tag peptide', a short internal open reading frame. During trans-translation Ala-aminoacylated tmRNA acts like a tRNA, entering the A-site of stalled ribosomes, displacing the stalled mRNA. The ribosome then switches to translate the ORF on the tmRNA; the nascent peptide is terminated with the 'tag peptide' encoded by the tmRNA and targeted for degradation. The ribosome is freed to recommence translation, which seems to be the essential function of trans-translation. This is SsrA-binding protein from Methylococcus capsulatus (strain ATCC 33009 / NCIMB 11132 / Bath).